The sequence spans 129 residues: Fluoride-specific ion channel FluC 1 (129 aa).

Helical transmembrane passes span 9 to 29 (LSVG…NLIW), 33 to 53 (GTLT…YFFV), 62 to 82 (LVTG…SFNL), and 98 to 118 (IYFF…MLVG). Residues glycine 72 and threonine 75 each contribute to the Na(+) site.

This sequence belongs to the fluoride channel Fluc/FEX (TC 1.A.43) family.

It is found in the cell membrane. It catalyses the reaction fluoride(in) = fluoride(out). Na(+) is not transported, but it plays an essential structural role and its presence is essential for fluoride channel function. In terms of biological role, fluoride-specific ion channel. Important for reducing fluoride concentration in the cell, thus reducing its toxicity. The protein is Fluoride-specific ion channel FluC 1 of Lactobacillus johnsonii (strain CNCM I-12250 / La1 / NCC 533).